The primary structure comprises 382 residues: S-adenosylmethionine synthase (382 aa).

Position 15 (H15) interacts with ATP. D17 is a binding site for Mg(2+). A K(+)-binding site is contributed by E43. Residues E56 and Q99 each coordinate L-methionine. Residues 99–109 form a flexible loop region; that stretch reads QSPDINQGVDR. ATP is bound by residues 164-166, 230-231, D239, 245-246, A262, and K266; these read DAK, RF, and RK. D239 contributes to the L-methionine binding site. K270 is a binding site for L-methionine.

Belongs to the AdoMet synthase family. As to quaternary structure, homotetramer; dimer of dimers. Mg(2+) is required as a cofactor. It depends on K(+) as a cofactor.

The protein resides in the cytoplasm. The enzyme catalyses L-methionine + ATP + H2O = S-adenosyl-L-methionine + phosphate + diphosphate. It participates in amino-acid biosynthesis; S-adenosyl-L-methionine biosynthesis; S-adenosyl-L-methionine from L-methionine: step 1/1. Functionally, catalyzes the formation of S-adenosylmethionine (AdoMet) from methionine and ATP. The overall synthetic reaction is composed of two sequential steps, AdoMet formation and the subsequent tripolyphosphate hydrolysis which occurs prior to release of AdoMet from the enzyme. This chain is S-adenosylmethionine synthase, found in Psychromonas ingrahamii (strain DSM 17664 / CCUG 51855 / 37).